The following is a 181-amino-acid chain: Oligoribonuclease (181 aa).

The 164-residue stretch at 8 to 171 (LIWIDLEMTG…QDIQESIAEL (164 aa)) folds into the Exonuclease domain. Residue Tyr129 is part of the active site.

This sequence belongs to the oligoribonuclease family.

Its subcellular location is the cytoplasm. In terms of biological role, 3'-to-5' exoribonuclease specific for small oligoribonucleotides. In Shewanella putrefaciens (strain CN-32 / ATCC BAA-453), this protein is Oligoribonuclease.